The sequence spans 306 residues: Probable histidinol-phosphatase (306 aa).

It belongs to the PHP hydrolase family. HisK subfamily.

It catalyses the reaction L-histidinol phosphate + H2O = L-histidinol + phosphate. It functions in the pathway amino-acid biosynthesis; L-histidine biosynthesis; L-histidine from 5-phospho-alpha-D-ribose 1-diphosphate: step 8/9. This is Probable histidinol-phosphatase from Schizosaccharomyces pombe (strain 972 / ATCC 24843) (Fission yeast).